We begin with the raw amino-acid sequence, 147 residues long: Large ribosomal subunit protein bL9 (147 aa).

Belongs to the bacterial ribosomal protein bL9 family.

Binds to the 23S rRNA. This chain is Large ribosomal subunit protein bL9, found in Campylobacter jejuni subsp. jejuni serotype O:23/36 (strain 81-176).